The primary structure comprises 31 residues: Acetyl-CoA carboxylase (31 aa).

The disordered stretch occupies residues 1–31; sequence RISSSVIAHKTQLDSGKREVYSSHMQLGGPK. Basic and acidic residues predominate over residues 11 to 21; sequence TQLDSGKREVY.

The enzyme catalyses hydrogencarbonate + acetyl-CoA + ATP = malonyl-CoA + ADP + phosphate + H(+). It participates in lipid metabolism; malonyl-CoA biosynthesis; malonyl-CoA from acetyl-CoA: step 1/1. In Catharanthus roseus (Madagascar periwinkle), this protein is Acetyl-CoA carboxylase.